Consider the following 858-residue polypeptide: Envelope glycoprotein gp160 (858 aa).

The first 19 residues, methionine 1–cysteine 19, serve as a signal peptide directing secretion. Residues threonine 20–tyrosine 679 lie on the Extracellular side of the membrane. Asparagine 34 carries an N-linked (GlcNAc...) asparagine; by host glycan. A disulfide bond links cysteine 41 and cysteine 54. 26 N-linked (GlcNAc...) asparagine; by host glycosylation sites follow: asparagine 67, asparagine 76, asparagine 119, asparagine 120, asparagine 151, asparagine 166, asparagine 179, asparagine 192, asparagine 193, asparagine 196, asparagine 206, asparagine 238, asparagine 241, asparagine 248, asparagine 272, asparagine 278, asparagine 289, asparagine 300, asparagine 310, asparagine 367, asparagine 371, asparagine 400, asparagine 410, asparagine 447, asparagine 463, and asparagine 466. 5 cysteine pairs are disulfide-bonded: cysteine 98–cysteine 214, cysteine 105–cysteine 205, cysteine 110–cysteine 163, cysteine 227–cysteine 257, and cysteine 237–cysteine 249. A V1 region spans residues cysteine 110–asparagine 162. Low complexity predominate over residues serine 111–threonine 134. The segment at serine 111–glutamate 142 is disordered. The segment at cysteine 163–cysteine 205 is V2. Positions cysteine 305 to tryptophan 339 are V3. Cysteine 305 and cysteine 340 are oxidised to a cystine. Cystine bridges form between cysteine 392-cysteine 446 and cysteine 399-cysteine 419. The interval cysteine 399–cysteine 419 is V4. A V5 region spans residues asparagine 462–phenylalanine 469. A fusion peptide region spans residues glycine 512–alanine 532. Positions leucine 575–arginine 591 are immunosuppression. 3 N-linked (GlcNAc...) asparagine; by host glycosylation sites follow: asparagine 611, asparagine 620, and asparagine 636. The stretch at glutamine 624–glutamine 645 forms a coiled coil. The segment at lysine 657–glutamine 678 is MPER; binding to GalCer. A helical membrane pass occupies residues glycine 680–leucine 700. Topologically, residues serine 701–leucine 858 are cytoplasmic. The YXXV motif; contains endocytosis signal motif lies at tyrosine 707–valine 710. A lipid anchor (S-palmitoyl cysteine; by host) is attached at cysteine 773. A Di-leucine internalization motif motif is present at residues leucine 857 to leucine 858.

The mature envelope protein (Env) consists of a homotrimer of non-covalently associated gp120-gp41 heterodimers. The resulting complex protrudes from the virus surface as a spike. There seems to be as few as 10 spikes on the average virion. Interacts with human CD4, CCR5 and CXCR4, to form a P4HB/PDI-CD4-CXCR4-gp120 complex. Gp120 also interacts with the C-type lectins CD209/DC-SIGN and CLEC4M/DC-SIGNR (collectively referred to as DC-SIGN(R)). Gp120 and gp41 interact with GalCer. In terms of assembly, the mature envelope protein (Env) consists of a homotrimer of non-covalently associated gp120-gp41 heterodimers. The resulting complex protrudes from the virus surface as a spike. There seems to be as few as 10 spikes on the average virion. Post-translationally, specific enzymatic cleavages in vivo yield mature proteins. Envelope glycoproteins are synthesized as an inactive precursor that is heavily N-glycosylated and processed likely by host cell furin in the Golgi to yield the mature SU and TM proteins. The cleavage site between SU and TM requires the minimal sequence [KR]-X-[KR]-R. In terms of processing, palmitoylation of the transmembrane protein and of Env polyprotein (prior to its proteolytic cleavage) is essential for their association with host cell membrane lipid rafts. Palmitoylation is therefore required for envelope trafficking to classical lipid rafts, but not for viral replication.

The protein resides in the virion membrane. It localises to the host cell membrane. The protein localises to the host endosome membrane. The surface protein gp120 (SU) attaches the virus to the host lymphoid cell by binding to the primary receptor CD4. This interaction induces a structural rearrangement creating a high affinity binding site for a chemokine coreceptor like CXCR4 and/or CCR5. This peculiar 2 stage receptor-interaction strategy allows gp120 to maintain the highly conserved coreceptor-binding site in a cryptic conformation, protected from neutralizing antibodies. Since CD4 also displays a binding site for the disulfide-isomerase P4HB/PDI, a P4HB/PDI-CD4-CXCR4-gp120 complex may form. In that complex, P4HB/PDI could reach and reduce gp120 disulfide bonds, causing major conformational changes in gp120. TXN, another PDI family member could also be involved in disulfide rearrangements in Env during fusion. These changes are transmitted to the transmembrane protein gp41 and are thought to activate its fusogenic potential by unmasking its fusion peptide. Functionally, the surface protein gp120 is a ligand for CD209/DC-SIGN and CLEC4M/DC-SIGNR, which are respectively found on dendritic cells (DCs), and on endothelial cells of liver sinusoids and lymph node sinuses. These interactions allow capture of viral particles at mucosal surfaces by these cells and subsequent transmission to permissive cells. DCs are professional antigen presenting cells, critical for host immunity by inducing specific immune responses against a broad variety of pathogens. They act as sentinels in various tissues where they take up antigen, process it, and present it to T-cells following migration to lymphoid organs. HIV subverts the migration properties of dendritic cells to gain access to CD4+ T-cells in lymph nodes. Virus transmission to permissive T-cells occurs either in trans (without DCs infection, through viral capture and transmission), or in cis (following DCs productive infection, through the usual CD4-gp120 interaction), thereby inducing a robust infection. In trans infection, bound virions remain infectious over days and it is proposed that they are not degraded, but protected in non-lysosomal acidic organelles within the DCs close to the cell membrane thus contributing to the viral infectious potential during DCs' migration from the periphery to the lymphoid tissues. On arrival at lymphoid tissues, intact virions recycle back to DCs' cell surface allowing virus transmission to CD4+ T-cells. Virion capture also seems to lead to MHC-II-restricted viral antigen presentation, and probably to the activation of HIV-specific CD4+ cells. In terms of biological role, the transmembrane protein gp41 (TM) acts as a class I viral fusion protein. Under the current model, the protein has at least 3 conformational states: pre-fusion native state, pre-hairpin intermediate state, and post-fusion hairpin state. During fusion of viral and target intracellular membranes, the coiled coil regions (heptad repeats) assume a trimer-of-hairpins structure, positioning the fusion peptide in close proximity to the C-terminal region of the ectodomain. The formation of this structure appears to drive apposition and subsequent fusion of viral and target cell membranes. Complete fusion occurs in host cell endosomes and is dynamin-dependent, however some lipid transfer might occur at the plasma membrane. The virus undergoes clathrin-dependent internalization long before endosomal fusion, thus minimizing the surface exposure of conserved viral epitopes during fusion and reducing the efficacy of inhibitors targeting these epitopes. Membranes fusion leads to delivery of the nucleocapsid into the cytoplasm. Its function is as follows. The envelope glycoprotein gp160 precursor down-modulates cell surface CD4 antigen by interacting with it in the endoplasmic reticulum and blocking its transport to the cell surface. The gp120-gp41 heterodimer seems to contribute to T-cell depletion during HIV-1 infection. The envelope glycoproteins expressed on the surface of infected cells induce apoptosis through an interaction with uninfected cells expressing the receptor (CD4) and the coreceptors CXCR4 or CCR5. This type of bystander killing may be obtained by at least three distinct mechanisms. First, the interaction between the 2 cells can induce cellular fusion followed by nuclear fusion within the syncytium. Syncytia are condemned to die from apoptosis. Second, the 2 interacting cells may not fuse entirely and simply exchange plasma membrane lipids, after a sort of hemifusion process, followed by rapid death. Third, it is possible that virus-infected cells, on the point of undergoing apoptosis, fuse with CD4-expressing cells, in which case apoptosis is rapidly transmitted from one cell to the other and thus occurs in a sort of contagious fashion. Functionally, the gp120-gp41 heterodimer allows rapid transcytosis of the virus through CD4 negative cells such as simple epithelial monolayers of the intestinal, rectal and endocervical epithelial barriers. Both gp120 and gp41 specifically recognize glycosphingolipids galactosyl-ceramide (GalCer) or 3' sulfo-galactosyl-ceramide (GalS) present in the lipid rafts structures of epithelial cells. Binding to these alternative receptors allows the rapid transcytosis of the virus through the epithelial cells. This transcytotic vesicle-mediated transport of virions from the apical side to the basolateral side of the epithelial cells does not involve infection of the cells themselves. The protein is Envelope glycoprotein gp160 (env) of Homo sapiens (Human).